Here is a 344-residue protein sequence, read N- to C-terminus: GTPase Obg (344 aa).

Residues 1–159 form the Obg domain; the sequence is MKFLDQAKVY…RWIWLRLKLI (159 aa). The region spanning 160-327 is the OBG-type G domain; sequence ADAGLVGLPN…ALRLLLSVVE (168 aa). GTP-binding positions include 166-173, 191-195, 212-215, 279-282, and 308-310; these read GLPNAGKS, FTTLH, DIPG, SKVD, and SAQ. Mg(2+) contacts are provided by S173 and T193.

The protein belongs to the TRAFAC class OBG-HflX-like GTPase superfamily. OBG GTPase family. In terms of assembly, monomer. Mg(2+) serves as cofactor.

It is found in the cytoplasm. In terms of biological role, an essential GTPase which binds GTP, GDP and possibly (p)ppGpp with moderate affinity, with high nucleotide exchange rates and a fairly low GTP hydrolysis rate. Plays a role in control of the cell cycle, stress response, ribosome biogenesis and in those bacteria that undergo differentiation, in morphogenesis control. The chain is GTPase Obg from Xanthobacter autotrophicus (strain ATCC BAA-1158 / Py2).